Consider the following 97-residue polypeptide: Putative membrane protein insertion efficiency factor (97 aa).

Belongs to the UPF0161 family.

It localises to the cell membrane. Its function is as follows. Could be involved in insertion of integral membrane proteins into the membrane. This Lactobacillus johnsonii (strain CNCM I-12250 / La1 / NCC 533) protein is Putative membrane protein insertion efficiency factor.